Reading from the N-terminus, the 358-residue chain is Ion-translocating oxidoreductase complex subunit D (358 aa).

4 consecutive transmembrane segments (helical) span residues 19–39, 41–61, 79–99, and 125–145; these read IMLW…YYFG, GVVL…FIAI, LTAL…VIII, and IGYV…MPPI. Thr-186 carries the post-translational modification FMN phosphoryl threonine. Helical transmembrane passes span 220–240, 248–268, 271–291, 297–317, and 321–341; these read FAQG…FLIL, IPVA…FTGF, LSAI…FIAT, SITP…VYLI, and GNYP…VPLI.

Belongs to the NqrB/RnfD family. The complex is composed of six subunits: RnfA, RnfB, RnfC, RnfD, RnfE and RnfG. Requires FMN as cofactor.

The protein resides in the cell inner membrane. Its function is as follows. Part of a membrane-bound complex that couples electron transfer with translocation of ions across the membrane. This Haemophilus influenzae (strain PittGG) protein is Ion-translocating oxidoreductase complex subunit D.